The sequence spans 975 residues: MDLNSASTVVLQVLTQATSQDTAVLKPAEEQLKQWETQPGFYSVLLNIFTNHTLDINVRWLAVLYFKHGIDRYWRRVAPHALSEEEKTTLRAGLITNFNEPINQIATQIAVLIAKVARLDCPRQWPELIPTLIESVKVQDDLRQHRALLTFYHVTKTLASKRLAADRKLFYDLASGIYNFACSLWNHHTDTFLQEVSSGNEAAILSSLERTLLSLKVLRKLTVNGFVEPHKNMEVMGFLHGIFERLKQFLECSRSIGTDNVCRDRLEKTIILFTKVLLDFLDQHPFSFTPLIQRSLEFSVSYVFTEVGEGVTFERFIVQCMNLIKMIVKNYAYKPSKNFEDSSPETLEAHKIKMAFFTYPTLTEICRRLVSHYFLLTEEELTMWEEDPEGFTVEETGGDSWKYSLRPCTEVLFIDIFHEYNQTLTPVLLEMMQTLQGPTNVEDMNALLIKDAVYNAVGLAAYELFDSVDFDQWFKNQLLPELQVIHNRYKPLRRRVIWLIGQWISVKFKSDLRPMLYEAICNLLQDQDLVVRIETATTLKLTVDDFEFRTDQFLPYLETMFTLLFQLLQQVTECDTKMHVLHVLSCVIERVNMQIRPYVGCLVQYLPLLWKQSEEHNMLRCAILTTLIHLVQGLGADSKNLYPFLLPVIQLSTDVSQPPHVYLLEDGLELWLVTLENSPCITPELLRIFQNMSPLLELSSENLRTCFKIINGYIFLSSTEFLQTYAVGLCQSFCELLKEITTEGQVQVLKVVENALKVNPILGPQMFQPILPYVFKGIIEGERYPVVMSTYLGVMGRVLLQNTSFFSSLLNEMAHKFNQEMDQLLGNMIEMWVDRMDNITQPERRKLSALALLSLLPSDNSVIQDKFCGIINISVEGLHDVMTEDPETGTYKDCMLMSHLEEPKVTEDEEPPTEQDKRKKMLALKDPVHTVSLQQFIYEKLKAQQEMLGEQGFQSLMETVDTEIVTQLQEFLQGF.

M1 bears the N-acetylmethionine mark. One can recognise an Importin N-terminal domain in the interval 28-100; it reads AEEQLKQWET…RAGLITNFNE (73 aa). HEAT repeat units lie at residues 123 to 160, 209 to 248, 318 to 356, 422 to 459, 473 to 509, 511 to 548, 555 to 593, 600 to 636, 640 to 677, 683 to 720, 743 to 764, 765 to 804, 819 to 849, 850 to 887, and 957 to 974; these read RQWPELIPTLIESVKVQDDLRQHRALLTFYHVTKTLAS, ERTLLSLKVLRKLTVNGFVEPHKNMEVMGFLHGIFERLKQ, VQCMNLIKMIVKNYAYKPSKNFEDSSPETLEAHKIKMAF, QTLTPVLLEMMQTLQGPTNVEDMNALLIKDAVYNAVGL, WFKNQLLPELQVIHNRYKPLRRRVIWLIGQWISVKFK, DLRPMLYEAICNLLQDQDLVVRIETATTLKLTVDDFEF, PYLETMFTLLFQLLQQVTECDTKMHVLHVLSCVIERVNM, GCLVQYLPLLWKQSEEHNMLRCAILTTLIHLVQGLGA, NLYPFLLPVIQLSTDVSQPPHVYLLEDGLELWLVTLEN, PELLRIFQNMSPLLELSSENLRTCFKIINGYIFLSSTE, EGQVQVLKVVENALKVNPILGP, QMFQPILPYVFKGIIEGERYPVVMSTYLGVMGRVLLQNTS, QEMDQLLGNMIEMWVDRMDNITQPERRKLSA, LALLSLLPSDNSVIQDKFCGIINISVEGLHDVMTEDPE, and METVDTEIVTQLQEFLQG. At S343 the chain carries Phosphoserine.

This sequence belongs to the importin beta family. In terms of assembly, interacts with UBE2E3 and RPL12.

Its subcellular location is the cytoplasm. It is found in the nucleus. Functionally, functions in nuclear protein import as nuclear transport receptor. Serves as receptor for nuclear localization signals (NLS) in cargo substrates. Is thought to mediate docking of the importin/substrate complex to the nuclear pore complex (NPC) through binding to nucleoporin and the complex is subsequently translocated through the pore by an energy requiring, Ran-dependent mechanism. At the nucleoplasmic side of the NPC, Ran binds to the importin, the importin/substrate complex dissociates and importin is re-exported from the nucleus to the cytoplasm where GTP hydrolysis releases Ran. The directionality of nuclear import is thought to be conferred by an asymmetric distribution of the GTP- and GDP-bound forms of Ran between the cytoplasm and nucleus. Mediates the nuclear import of UBE2E3, and of RPL12. The polypeptide is Importin-11 (IPO11) (Homo sapiens (Human)).